The following is a 771-amino-acid chain: Solute carrier family 7 member 14 (771 aa).

The next 6 helical transmembrane spans lie at 58 to 78 (LISL…SGLV), 83 to 103 (AGPG…LSGV), 119 to 141 (AYTY…NLIL), 187 to 207 (YPDL…ALGV), 216 to 236 (VLNV…LFFI), and 251 to 271 (WSGV…FDII). Asn282 carries N-linked (GlcNAc...) asparagine glycosylation. Transmembrane regions (helical) follow at residues 291–311 (ASLV…TLMV), 336–356 (FVVA…SLFP), 360–380 (VIYA…VSSY), 384–404 (PVVA…LVSL), and 407–427 (LIEM…VCVL). Ser465, Ser468, and Ser488 each carry phosphoserine. Transmembrane regions (helical) follow at residues 565–585 (VTIC…FIIF), 596–616 (WAIL…FVIL), 628–648 (MAPC…YLML), and 655–675 (WIRF…YGIW). Asn676 carries N-linked (GlcNAc...) asparagine glycosylation. The disordered stretch occupies residues 736–771 (DAKANGRTSSKAKSKSKHKQNSEALIANDELDYSPE). Over residues 745-754 (SKAKSKSKHK) the composition is skewed to basic residues. Phosphoserine is present on residues Ser757 and Ser769.

This sequence belongs to the amino acid-polyamine-organocation (APC) superfamily. Cationic amino acid transporter (CAT) (TC 2.A.3.3) family. In terms of tissue distribution, expressed in skin fibroblasts.

The protein localises to the lysosome membrane. It carries out the reaction 4-aminobutanoate(in) = 4-aminobutanoate(out). Its function is as follows. Imports 4-aminobutanoate (GABA) into lysosomes. May act as a GABA sensor that regulates mTORC2-dependent INS signaling and gluconeogenesis. The transport mechanism and substrate selectivity remain to be elucidated. The chain is Solute carrier family 7 member 14 from Homo sapiens (Human).